Consider the following 931-residue polypeptide: Myelin regulatory factor homolog 1 (931 aa).

Residues 1–658 lie on the Cytoplasmic side of the membrane; it reads MSSSDLLKGE…SCGSRLSQGT (658 aa). The interval 29 to 143 is disordered; the sequence is TDEDDGSMVS…QQHQQTRGGN (115 aa). Polar residues predominate over residues 37 to 52; sequence VSPTSSADSMHQNLGV. A compositionally biased stretch (low complexity) spans 53-68; sequence QQQQQQMLQAQQRQNQ. Residues 117–126 are compositionally biased toward polar residues; it reads DNGNQTMNNI. Residues 127 to 138 are compositionally biased toward low complexity; that stretch reads QSQQLSQQQHQQ. Residues 169–436 constitute a DNA-binding region (NDT80); the sequence is GTAAVNQPTN…TNPGSFEPQD (268 aa). The region spanning 483–582 is the Peptidase S74 domain; the sequence is SDIRLKEAIT…RMTGDLDSKI (100 aa). The helical transmembrane segment at 659-679 threads the bilayer; the sequence is VVTLVSIMAACLLAMSALYVL. Topologically, residues 680 to 931 are lumenal; it reads DWHNRNYGYH…FYRMCTLSSS (252 aa). N-linked (GlcNAc...) asparagine glycans are attached at residues asparagine 797 and asparagine 912.

This sequence belongs to the MRF family. As to quaternary structure, homotrimer. Interacts with myrf-2. Interacts (via C-terminus) with pan-1 (via LRR regions); the interaction promotes the role of myrf-1 in the synaptic remodeling of DD GABAergic motor neurons at the cell membrane. Myelin regulatory factor: Follows autocatalytic cleavage via the peptidase S74 domain. Autoprocessing is apparently constitutive and is essential for transcriptional activity. As to expression, widely expressed in many tissues, including neuronal, muscle and epidermal stem cells. In neurons, expressed in dorsal D (DD) GABAergic motor neurons.

It is found in the endoplasmic reticulum membrane. The protein resides in the nucleus. It localises to the apical cell membrane. Its subcellular location is the cytoplasm. Functionally, constitutes a precursor of the transcription factor. Mediates the autocatalytic cleavage that releases the Myelin regulatory factor homolog 1, N-terminal component that specifically activates transcription of genes involved in synaptic rewiring during nervous system maturation. Membrane-bound part that has no transcription factor activity and remains attached to the endoplasmic reticulum membrane following cleavage. In terms of biological role, transcription factor that specifically activates expression of genes involved in synaptic rewiring during nervous system maturation. Specifically required for dorsal D (DD) GABAergic motor neurons synaptic rewiring. Acts in complex with myrf-2 paralog. The sequence is that of Myelin regulatory factor homolog 1 from Caenorhabditis elegans.